Here is an 89-residue protein sequence, read N- to C-terminus: Small ribosomal subunit protein uS15 (89 aa).

Belongs to the universal ribosomal protein uS15 family. In terms of assembly, part of the 30S ribosomal subunit. Forms a bridge to the 50S subunit in the 70S ribosome, contacting the 23S rRNA.

In terms of biological role, one of the primary rRNA binding proteins, it binds directly to 16S rRNA where it helps nucleate assembly of the platform of the 30S subunit by binding and bridging several RNA helices of the 16S rRNA. Forms an intersubunit bridge (bridge B4) with the 23S rRNA of the 50S subunit in the ribosome. This Desulfatibacillum aliphaticivorans protein is Small ribosomal subunit protein uS15.